We begin with the raw amino-acid sequence, 1384 residues long: Sterol 3-beta-glucosyltransferase (1384 aa).

Disordered stretches follow at residues 1–64 (MPNM…DGQL), 86–189 (ARFD…TPRA), and 204–229 (DKKQ…QSCA). The span at 7 to 19 (LLEDAKRRVDRRL) shows a compositional bias: basic and acidic residues. The segment covering 21 to 36 (ASRQSISSSRIFSSAF) has biased composition (low complexity). Over residues 38–47 (DRLKDDHDAQ) the composition is skewed to basic and acidic residues. The segment covering 146-156 (LRSLKPSPKSS) has biased composition (low complexity). The segment covering 158 to 172 (GTETTVQTEPPTSDE) has biased composition (polar residues). The segment covering 174 to 189 (SPLASPRRARSATPRA) has biased composition (low complexity). Residues 209–229 (ADQPSSSTKGETDGTSEQSCA) show a composition bias toward polar residues. The 48-residue stretch at 237–284 (KEMFGFEMPEKVLMEYACSLLQNILLQGYMYVTEGHICFYAYLPRKSA) folds into the GRAM 1 domain. The 100-residue stretch at 285 to 384 (VTIRSGYLHK…WVKALQKVIF (100 aa)) folds into the PH domain. Disordered regions lie at residues 457 to 526 (MKTS…RQRD) and 560 to 629 (NRSD…VNSS). 3 stretches are compositionally biased toward polar residues: residues 458-473 (KTSQ…TSPA), 483-494 (WSLNSDLSQSRG), and 560-572 (NRSD…TIHT). Residues 578-588 (PSGDRTGRRLS) show a composition bias toward basic and acidic residues. Polar residues predominate over residues 604-629 (RNGQEMQYASSDSDQGTQHPSKVNSS). Residues 714–817 (RFRAHFALPS…RDDCAVTVHQ (104 aa)) enclose the GRAM 2 domain. UDP-alpha-D-glucose contacts are provided by Ser901, Arg902, Asp904, Ala1204, His1206, His1219, Gly1223, Thr1224, Asp1243, and Gln1244. Polar residues predominate over residues 1322–1336 (VSSTPFSPTPSAKTT). Residues 1322 to 1350 (VSSTPFSPTPSAKTTAEQEEDDVDDSEEW) are disordered. Over residues 1338 to 1350 (EQEEDDVDDSEEW) the composition is skewed to acidic residues.

This sequence belongs to the glycosyltransferase 28 family.

It is found in the cytoplasm. The protein localises to the preautophagosomal structure membrane. The enzyme catalyses a sterol + UDP-alpha-D-glucose = a sterol 3-beta-D-glucoside + UDP + H(+). It carries out the reaction ergosterol + UDP-alpha-D-glucose = ergosteryl 3-beta-D-glucoside + UDP + H(+). Sterol glycosyltransferase responsible for the glycosylation of ergosterol to form ergosterol-glucoside. Involved in cytoplasm to vacuole transport (Cvt), pexophagy or nonselective autophagy. This Aspergillus oryzae (strain ATCC 42149 / RIB 40) (Yellow koji mold) protein is Sterol 3-beta-glucosyltransferase.